Reading from the N-terminus, the 189-residue chain is Guanylate kinase (189 aa).

Positions 8–186 (GKLTVITGPS…AVIELESLMG (179 aa)) constitute a Guanylate kinase-like domain. 15-22 (GPSGVGKG) contributes to the ATP binding site.

This sequence belongs to the guanylate kinase family.

The protein localises to the cytoplasm. It carries out the reaction GMP + ATP = GDP + ADP. Its function is as follows. Essential for recycling GMP and indirectly, cGMP. This Prochlorococcus marinus (strain MIT 9313) protein is Guanylate kinase.